We begin with the raw amino-acid sequence, 274 residues long: 2,3,4,5-tetrahydropyridine-2,6-dicarboxylate N-succinyltransferase (274 aa).

Positions 104 and 141 each coordinate substrate.

This sequence belongs to the transferase hexapeptide repeat family. Homotrimer.

It localises to the cytoplasm. The catalysed reaction is (S)-2,3,4,5-tetrahydrodipicolinate + succinyl-CoA + H2O = (S)-2-succinylamino-6-oxoheptanedioate + CoA. It functions in the pathway amino-acid biosynthesis; L-lysine biosynthesis via DAP pathway; LL-2,6-diaminopimelate from (S)-tetrahydrodipicolinate (succinylase route): step 1/3. This Shewanella oneidensis (strain ATCC 700550 / JCM 31522 / CIP 106686 / LMG 19005 / NCIMB 14063 / MR-1) protein is 2,3,4,5-tetrahydropyridine-2,6-dicarboxylate N-succinyltransferase.